The following is a 538-amino-acid chain: MFS-type transporter oryC (538 aa).

6 helical membrane-spanning segments follow: residues 14 to 34 (LTGG…MSLF), 67 to 87 (TVTA…FTIG), 96 to 116 (ILLG…SFSL), 120 to 140 (FVGR…APIW), 162 to 182 (IFGF…GGSI), and 186 to 206 (FPLA…PWLP). The N-linked (GlcNAc...) asparagine glycan is linked to N268. 6 helical membrane-spanning segments follow: residues 288–308 (FGGI…SVGL), 315–335 (LLAA…VLLV), 342–362 (GLML…TILL), 379–399 (VAFF…VPWL), 416–436 (VATA…PIGI), and 443–463 (FWIV…FLYP). N467 carries an N-linked (GlcNAc...) asparagine glycan.

It belongs to the major facilitator superfamily. Sugar transporter (TC 2.A.1.1) family.

The protein localises to the membrane. Functionally, MFS-type transporter; part of the gene cluster that mediates the biosynthesis of oryzines, natural products with an unusual maleidride backbone. This chain is MFS-type transporter oryC, found in Aspergillus oryzae (strain ATCC 42149 / RIB 40) (Yellow koji mold).